Here is a 762-residue protein sequence, read N- to C-terminus: Phosphoribosylformylglycinamidine synthase subunit PurL (762 aa).

His58 is an active-site residue. 2 residues coordinate ATP: Tyr61 and Arg105. Mg(2+) is bound at residue Glu107. Substrate-binding positions include 108 to 111 and Arg130; that span reads SHNH. The Proton acceptor role is filled by His109. Asp131 is a binding site for Mg(2+). Position 255 (Gln255) interacts with substrate. Mg(2+) is bound at residue Asp283. 327–329 serves as a coordination point for substrate; the sequence is ESQ. ATP-binding residues include Asn513 and Gly550. Asn551 provides a ligand contact to Mg(2+). Ser553 is a binding site for substrate.

Belongs to the FGAMS family. As to quaternary structure, monomer. Part of the FGAM synthase complex composed of 1 PurL, 1 PurQ and 2 PurS subunits.

The protein resides in the cytoplasm. The catalysed reaction is N(2)-formyl-N(1)-(5-phospho-beta-D-ribosyl)glycinamide + L-glutamine + ATP + H2O = 2-formamido-N(1)-(5-O-phospho-beta-D-ribosyl)acetamidine + L-glutamate + ADP + phosphate + H(+). It functions in the pathway purine metabolism; IMP biosynthesis via de novo pathway; 5-amino-1-(5-phospho-D-ribosyl)imidazole from N(2)-formyl-N(1)-(5-phospho-D-ribosyl)glycinamide: step 1/2. Part of the phosphoribosylformylglycinamidine synthase complex involved in the purines biosynthetic pathway. Catalyzes the ATP-dependent conversion of formylglycinamide ribonucleotide (FGAR) and glutamine to yield formylglycinamidine ribonucleotide (FGAM) and glutamate. The FGAM synthase complex is composed of three subunits. PurQ produces an ammonia molecule by converting glutamine to glutamate. PurL transfers the ammonia molecule to FGAR to form FGAM in an ATP-dependent manner. PurS interacts with PurQ and PurL and is thought to assist in the transfer of the ammonia molecule from PurQ to PurL. The chain is Phosphoribosylformylglycinamidine synthase subunit PurL from Corynebacterium glutamicum (strain ATCC 13032 / DSM 20300 / JCM 1318 / BCRC 11384 / CCUG 27702 / LMG 3730 / NBRC 12168 / NCIMB 10025 / NRRL B-2784 / 534).